The chain runs to 876 residues: Inter-alpha-trypsin inhibitor heavy chain H3 (876 aa).

The N-terminal stretch at 1 to 18 (MVALSHLGSALQLGSLWG) is a signal peptide. Residues 19–31 (FPRSPFRLLGKRS) constitute a propeptide that is removed on maturation. Positions 26–155 (LLGKRSLPEG…KVTFELTYEE (130 aa)) constitute a VIT domain. An N-linked (GlcNAc...) asparagine glycan is attached at asparagine 88. The VWFA domain maps to 281–464 (NVAFVIDISG…LQLQGFYEEV (184 aa)). N-linked (GlcNAc...) asparagine glycosylation is present at asparagine 577. Aspartate 637 bears the Aspartate 1-(chondroitin 4-sulfate)-ester mark. Positions 638-876 (PHFIIQVPEK…HTDYIVPNLF (239 aa)) are excised as a propeptide.

The protein belongs to the ITIH family. I-alpha-I plasma protease inhibitors are assembled from one or two heavy chains (HC) and one light chain, bikunin. Pre-alpha-inhibitor (P-alpha-I) is composed of ITIH3/HC3 and bikunin. Heavy chains are linked to bikunin via chondroitin 4-sulfate esterified to the alpha-carboxyl of the C-terminal aspartate after propeptide cleavage.

It is found in the secreted. Functionally, may act as a carrier of hyaluronan in serum or as a binding protein between hyaluronan and other matrix protein, including those on cell surfaces in tissues to regulate the localization, synthesis and degradation of hyaluronan which are essential to cells undergoing biological processes. This is Inter-alpha-trypsin inhibitor heavy chain H3 (ITIH3) from Pongo abelii (Sumatran orangutan).